The primary structure comprises 66 residues: Omega conotoxin-CVIE (66 aa).

The first 17 residues, 1–17 (VVIVAVLLLTACQLITA), serve as a signal peptide directing secretion. Positions 18 to 40 (NDSRGTQKHRALRSDTKLSMSTR) are excised as a propeptide. 3 cysteine pairs are disulfide-bonded: Cys-41–Cys-56, Cys-48–Cys-60, and Cys-55–Cys-65. Cys-65 is subject to Cysteine amide.

This sequence belongs to the conotoxin O1 superfamily. Expressed by the venom duct.

It localises to the secreted. In terms of biological role, omega-conotoxins act at presynaptic membranes, they bind and block voltage-gated calcium channels. This toxin blocks N-type calcium channels (Cav2.2/CACNA1B). It shows a higher potency when Cav2.2/CACNA1B is only expressed with the ancillary subunit CACNB3 (IC(50)=0.12 nM) than on Cav2.2/CACNA1B expressed with the ancillary subunits CACNA2D1 and CACNB3 (IC(50)=2.6 nM). The Cav2.2/CACNA1B block by this toxin is voltage-independent, whereas the recovery from toxin block is voltage-dependent. There is a low recovery at physiological membrane potential and a high recovery with hyperpolarized potential. This indicates that the toxin has a higher affinity for Cav2.2/CACNA1B in the inactivated state. It is noteworthy that ancillary subunits beta modulate recovery from this toxin block. Cav2.2/CACNA1B expressed with the ancillary subunit CACNB2a (isoform 2a) almost recover completely from this toxin block, whereas Cav2.2/CACNA1B expressed with CACNB3 exhibits relatively weak recovery. Inhibition by this toxin of excitatory synaptic transmission is reversible. In vivo, when tested on rat model of persistent pain, this toxin blocks chronic pain behavior. This Conus catus (Cat cone) protein is Omega conotoxin-CVIE.